The primary structure comprises 478 residues: MKTVKKVNFNGQPFHFIGIGGIGMSALAYILAERNLPVSGSDLRPTHITQRLQGAGAHIFHRQEANNLALFHSPGPQNSSQTVPQVICSTAINDHNKEYQAARDLGYPIFHRSDVLAALIADYDSIAVAGTHGKTTTSSLIGYVLLEAGLDPTIIVGGEVDAWEGNARLGQGRFLVAEADESDGSLTKHAPKIGVITNIELDHPDHYQNLSEVIDTFHEFAHQCQILVACLDCDTIAEHFRPTISYSLDPEKGADYTVSEIIYEQGMMKASVWEKGSYLGQMEVKIPGQHNISNALAVVAIGRYLGLEFAVIADAIATFAGAKRRFEHKGEANGITFIDDYAHHPSELLATLAAAKLKVEGKQYQRSIAIFQPHRYSRTTAFLEEFGSAFSSADVVVLTDIYSAGEVNINHVTGQQVAEQVRKHHKNAYYHPELSSLGQFLLEILQPGDLALFLGAGNLNQVIPEMLSLYREQLAVRV.

130–136 serves as a coordination point for ATP; it reads GTHGKTT.

This sequence belongs to the MurCDEF family.

Its subcellular location is the cytoplasm. It carries out the reaction UDP-N-acetyl-alpha-D-muramate + L-alanine + ATP = UDP-N-acetyl-alpha-D-muramoyl-L-alanine + ADP + phosphate + H(+). It functions in the pathway cell wall biogenesis; peptidoglycan biosynthesis. Its function is as follows. Cell wall formation. This chain is UDP-N-acetylmuramate--L-alanine ligase, found in Microcystis aeruginosa (strain NIES-843 / IAM M-2473).